Here is a 210-residue protein sequence, read N- to C-terminus: NADH dehydrogenase [ubiquinone] iron-sulfur protein 8, mitochondrial (210 aa).

The transit peptide at 1–34 directs the protein to the mitochondrion; the sequence is MRCLTTPMLLRALAQAARAGPPGGRSLHSSAVAA. 2 4Fe-4S ferredoxin-type domains span residues 102–131 and 141–170; these read RRYP…IEAE and TRYD…EGPN. The [4Fe-4S] cluster site is built by Cys111, Cys114, Cys117, Cys121, Cys150, Cys153, Cys156, and Cys160.

It belongs to the complex I 23 kDa subunit family. Core subunit of respiratory chain NADH dehydrogenase (Complex I) which is composed of 45 different subunits. This is a component of the iron-sulfur (IP) fragment of the enzyme. Interacts with RAB5IF. Requires [4Fe-4S] cluster as cofactor. In terms of tissue distribution, expressed in all tissues with the highest level in heart and skeletal muscle and the lowest level in lung.

It is found in the mitochondrion inner membrane. It catalyses the reaction a ubiquinone + NADH + 5 H(+)(in) = a ubiquinol + NAD(+) + 4 H(+)(out). Core subunit of the mitochondrial membrane respiratory chain NADH dehydrogenase (Complex I) which catalyzes electron transfer from NADH through the respiratory chain, using ubiquinone as an electron acceptor. Essential for the catalytic activity and assembly of complex I. This Homo sapiens (Human) protein is NADH dehydrogenase [ubiquinone] iron-sulfur protein 8, mitochondrial (NDUFS8).